Reading from the N-terminus, the 361-residue chain is Homer protein homolog 3 (361 aa).

The segment at 1–80 (MSTAREQPIF…TKTSQKFGQW (80 aa)) is required for interaction with NFATC2. The region spanning 1-113 (MSTAREQPIF…EKFQEVKEAA (113 aa)) is the WH1 domain. The interval 114 to 169 (RLAREKSQDGGELTSPALGLASHQVPPSPLVSANGPGEEKLFRSQSADAPGPTERE) is disordered. Residues Ser120 and Ser159 each carry the phosphoserine modification. Coiled-coil stretches lie at residues 191 to 243 (ALQD…SEVT) and 254 to 358 (GQSL…RLAE).

It belongs to the Homer family. As to quaternary structure, tetramer. Isoform 1 and isoform 2 encode coiled-coil structures that mediate homo- and heteromultimerization. Interacts with NFATC2; interaction is calcium independent; interaction competes with PPP3CA for NFATC2 binding; interaction is reduced by AKT activation. Interacts with NFATC1 and NFATC4. Interacts with SHANK1; forms a high-order complex at least composed of SHANK1 and HOMER3; the complex formation is regulated by CAMK2A-mediated phosphorylation.

The protein localises to the cytoplasm. It localises to the postsynaptic density. The protein resides in the synapse. Its function is as follows. Postsynaptic density scaffolding protein. Binds and cross-links cytoplasmic regions of GRM1, GRM5, ITPR1, DNM3, RYR1, RYR2, SHANK1 and SHANK3. By physically linking GRM1 and GRM5 with ER-associated ITPR1 receptors, it aids the coupling of surface receptors to intracellular calcium release. Isoforms can be differently regulated and may play an important role in maintaining the plasticity at glutamatergic synapses. Negatively regulates T cell activation by inhibiting the calcineurin-NFAT pathway. Acts by competing with calcineurin/PPP3CA for NFAT protein binding, hence preventing NFAT activation by PPP3CA. This is Homer protein homolog 3 from Homo sapiens (Human).